Here is a 317-residue protein sequence, read N- to C-terminus: Transaldolase (317 aa).

Lys132 acts as the Schiff-base intermediate with substrate in catalysis.

It belongs to the transaldolase family. Type 1 subfamily. As to quaternary structure, homodimer.

Its subcellular location is the cytoplasm. The catalysed reaction is D-sedoheptulose 7-phosphate + D-glyceraldehyde 3-phosphate = D-erythrose 4-phosphate + beta-D-fructose 6-phosphate. Its pathway is carbohydrate degradation; pentose phosphate pathway; D-glyceraldehyde 3-phosphate and beta-D-fructose 6-phosphate from D-ribose 5-phosphate and D-xylulose 5-phosphate (non-oxidative stage): step 2/3. In terms of biological role, transaldolase is important for the balance of metabolites in the pentose-phosphate pathway. This is Transaldolase (talB) from Escherichia coli O104:H4 (strain 2009EL-2071).